The primary structure comprises 317 residues: tRNA dimethylallyltransferase (317 aa).

19–26 (GPTASGKS) is an ATP binding site. Residue 21–26 (TASGKS) coordinates substrate. The segment at 44 to 47 (DSMQ) is interaction with substrate tRNA.

It belongs to the IPP transferase family. As to quaternary structure, monomer. Mg(2+) serves as cofactor.

It carries out the reaction adenosine(37) in tRNA + dimethylallyl diphosphate = N(6)-dimethylallyladenosine(37) in tRNA + diphosphate. Catalyzes the transfer of a dimethylallyl group onto the adenine at position 37 in tRNAs that read codons beginning with uridine, leading to the formation of N6-(dimethylallyl)adenosine (i(6)A). In Methylorubrum extorquens (strain CM4 / NCIMB 13688) (Methylobacterium extorquens), this protein is tRNA dimethylallyltransferase.